Reading from the N-terminus, the 165-residue chain is Lipoprotein signal peptidase (165 aa).

4 helical membrane-spanning segments follow: residues 11–31 (YWVL…AVLS), 41–61 (VIPS…FSFL), 64–84 (QGGW…AYLV), and 92–112 (FATL…GNVI). Catalysis depends on residues D122 and D140. Residues 132 to 152 (FYPAFNIADSFICVGAVLAVL) traverse the membrane as a helical segment.

The protein belongs to the peptidase A8 family.

It is found in the cell inner membrane. The catalysed reaction is Release of signal peptides from bacterial membrane prolipoproteins. Hydrolyzes -Xaa-Yaa-Zaa-|-(S,diacylglyceryl)Cys-, in which Xaa is hydrophobic (preferably Leu), and Yaa (Ala or Ser) and Zaa (Gly or Ala) have small, neutral side chains.. The protein operates within protein modification; lipoprotein biosynthesis (signal peptide cleavage). This protein specifically catalyzes the removal of signal peptides from prolipoproteins. This chain is Lipoprotein signal peptidase, found in Neisseria meningitidis serogroup A / serotype 4A (strain DSM 15465 / Z2491).